A 515-amino-acid polypeptide reads, in one-letter code: GMP synthase [glutamine-hydrolyzing] (515 aa).

Positions 6 to 198 constitute a Glutamine amidotransferase type-1 domain; that stretch reads KVIIIDYGSQ…LFHVAKLKAD (193 aa). Residue cysteine 83 is the Nucleophile of the active site. Catalysis depends on residues histidine 172 and glutamate 174. Residues 199 to 390 form the GMPS ATP-PPase domain; the sequence is WTMSSFVERA…LGLPDFIIWR (192 aa). 226-232 contributes to the ATP binding site; it reads SGGIDST.

As to quaternary structure, homodimer.

It catalyses the reaction XMP + L-glutamine + ATP + H2O = GMP + L-glutamate + AMP + diphosphate + 2 H(+). Its pathway is purine metabolism; GMP biosynthesis; GMP from XMP (L-Gln route): step 1/1. Its function is as follows. Catalyzes the synthesis of GMP from XMP. This chain is GMP synthase [glutamine-hydrolyzing], found in Nitratidesulfovibrio vulgaris (strain DP4) (Desulfovibrio vulgaris).